A 114-amino-acid polypeptide reads, in one-letter code: Large ribosomal subunit protein uL22 (114 aa).

This sequence belongs to the universal ribosomal protein uL22 family. Part of the 50S ribosomal subunit.

This protein binds specifically to 23S rRNA; its binding is stimulated by other ribosomal proteins, e.g. L4, L17, and L20. It is important during the early stages of 50S assembly. It makes multiple contacts with different domains of the 23S rRNA in the assembled 50S subunit and ribosome. Functionally, the globular domain of the protein is located near the polypeptide exit tunnel on the outside of the subunit, while an extended beta-hairpin is found that lines the wall of the exit tunnel in the center of the 70S ribosome. In Streptococcus uberis (strain ATCC BAA-854 / 0140J), this protein is Large ribosomal subunit protein uL22.